The sequence spans 290 residues: Large ribosomal subunit protein uL3 (290 aa).

Gln-152 carries the N5-methylglutamine modification. The segment at 250-290 (ARLAEEQAAAEAESLAQAEAEIAAEGSDAAPEGDADKKDGE) is disordered. Low complexity predominate over residues 255–274 (EQAAAEAESLAQAEAEIAAE).

This sequence belongs to the universal ribosomal protein uL3 family. As to quaternary structure, part of the 50S ribosomal subunit. Forms a cluster with proteins L14 and L19. Post-translationally, methylated by PrmB.

One of the primary rRNA binding proteins, it binds directly near the 3'-end of the 23S rRNA, where it nucleates assembly of the 50S subunit. This Jannaschia sp. (strain CCS1) protein is Large ribosomal subunit protein uL3.